Consider the following 142-residue polypeptide: Hemoglobin subunit alpha (142 aa).

One can recognise a Globin domain in the interval 2–142 (VLSAADKGHV…VSTVLTSKYR (141 aa)). S4 is subject to Phosphoserine. Residues K8 and K12 each carry the N6-succinyllysine modification. At K17 the chain carries N6-acetyllysine; alternate. K17 carries the N6-succinyllysine; alternate modification. A Phosphotyrosine modification is found at Y25. S36 carries the post-translational modification Phosphoserine. The residue at position 41 (K41) is an N6-succinyllysine. Phosphoserine is present on S50. H59 is an O2 binding site. Position 88 (H88) interacts with heme b. Phosphoserine is present on S103. A Phosphothreonine modification is found at T109. S125 carries the post-translational modification Phosphoserine. A phosphothreonine mark is found at T135 and T138. The residue at position 139 (S139) is a Phosphoserine.

Belongs to the globin family. In terms of assembly, heterotetramer of two alpha chains and two beta chains. As to expression, red blood cells.

Involved in oxygen transport from the lung to the various peripheral tissues. Its function is as follows. Hemopressin acts as an antagonist peptide of the cannabinoid receptor CNR1. Hemopressin-binding efficiently blocks cannabinoid receptor CNR1 and subsequent signaling. This Notamacropus eugenii (Tammar wallaby) protein is Hemoglobin subunit alpha (HBA).